Here is a 296-residue protein sequence, read N- to C-terminus: LysM and putative peptidoglycan-binding domain-containing protein 4 (296 aa).

The Extracellular portion of the chain corresponds to 1–217 (MRHKELLSKT…PMDGADCGIQ (217 aa)). Asparagine 30 carries N-linked (GlcNAc...) asparagine glycosylation. Positions 74-118 (LQRELAQEDSLNKLALQYGCKVADIKKVNNFIREQDLYALKSIKS) constitute a LysM domain. A helical membrane pass occupies residues 218 to 238 (WWNAVFIMLLIGIVLPIFYLV). Residues 239 to 296 (YFKIQASGETPNSLNTAAIPNGSMAMGTVPGQAPRLAVAVPTVPSADSQFSQTTQAGN) are Cytoplasmic-facing.

It is found in the membrane. The sequence is that of LysM and putative peptidoglycan-binding domain-containing protein 4 (LYSMD4) from Pongo abelii (Sumatran orangutan).